Here is a 160-residue protein sequence, read N- to C-terminus: Large ribosomal subunit protein bL17 (160 aa).

The segment covering 123–141 (DEKRQKRAEARAKRREEMQ) has biased composition (basic and acidic residues). The interval 123 to 160 (DEKRQKRAEARAKRREEMQKAMAEQQQAEGGEPEGGNE) is disordered. Positions 142–152 (KAMAEQQQAEG) are enriched in low complexity.

The protein belongs to the bacterial ribosomal protein bL17 family. In terms of assembly, part of the 50S ribosomal subunit. Contacts protein L32.

The polypeptide is Large ribosomal subunit protein bL17 (Acidobacterium capsulatum (strain ATCC 51196 / DSM 11244 / BCRC 80197 / JCM 7670 / NBRC 15755 / NCIMB 13165 / 161)).